The primary structure comprises 369 residues: Trans-enoyl reductase pyiC (369 aa).

52-55 (CDYK) is an NADP(+) binding site. Position 137–144 (137–144 (TGIGTLGM)) interacts with substrate. Residues 195 to 198 (SPKN), Tyr213, and 260 to 261 (LE) contribute to the NADP(+) site. 280–284 (GPLLL) serves as a coordination point for substrate. Residue 349 to 350 (VS) coordinates NADP(+).

Belongs to the zinc-containing alcohol dehydrogenase family. In terms of assembly, monomer.

Its pathway is mycotoxin biosynthesis. Trans-enoyl reductase; part of the gene cluster that mediates the biosynthesis of the mycotoxin pyrichalasin H, a tyrosine-derived cytochalasan that inhibits the growth of rice seedlings, but also inhibits lymphocyte capping and actin polymerization and alters cell morphology. Pyrichalasin H is indicated as the responsible agent for the genus-specific pathogenicity of M.grisea toward crabgrass. The first step in the pathway is catalyzed by the O-methyltransferase pyiA which methylates free tyrosine to generate the precursor O-methyltyrosine. The hybrid PKS-NRPS pyiS, assisted by the enoyl reductase pyiC, are responsible for fusion of the O-methyltyrosine precursor and the polyketide backbone. The polyketide synthase module (PKS) of pyiS is responsible for the synthesis of the polyketide backbone and the downstream nonribosomal peptide synthetase (NRPS) amidates the carboxyl end of the polyketide with the O-methyltyrosine precursor. As the NRPS A-domain demonstrates substrate tolerance, pyiS can also use phenylalanine, tyrosine and even para-chlorophenylalanine as amino acid precursor, which leads to the production of novel cytochalasans, including halogenated cytochalasans. Because pyiS lacks a designated enoylreductase (ER) domain, the required activity is provided the enoyl reductase pyiC. Reduction by the hydrolyase pyiE, followed by dehydration and intra-molecular Diels-Alder cyclization by the Diels-Alderase pyiF then yield the required isoindolone-fused macrocycle. The tailoring cytochrome P450 monooxygenases piyD and piyG catalyze the hydroxylation at C-18 and C-7, respectivily, whereas the short-chain dehydrogenase/reductase pyiH reduces the carbonyl at C-21 in preparation for the transfer of an acetyl group by the acetyltransferase pyiB. These 3 reactions whose order is not clear yet, lead to the production of O-methylpyrichalasin J, a deacetylated pyrichalasin H. Finally, pyiB to converts O-methylpyrichalasin J into the final product pyrichalasin H via acetylation of C-21. The protein is Trans-enoyl reductase pyiC of Pyricularia grisea (Crabgrass-specific blast fungus).